The following is a 294-amino-acid chain: Putative ribose uptake protein RbsU (294 aa).

The next 10 helical transmembrane spans lie at 2-24 (NAVN…VIVG), 34-56 (ILGT…GTPI), 63-82 (IFCL…TFHV), 92-114 (MPIT…LGNW), 121-140 (LIGF…TAWS), 150-172 (GAVK…SAFP), 179-198 (GFQG…IIFG), 218-235 (IFSG…LISA), 242-264 (LATG…IYIL), and 274-293 (IAVM…TAFI).

Belongs to the GRP transporter (TC 2.A.7.5) family.

The protein resides in the cell membrane. Functionally, could be involved in the uptake of ribose. The protein is Putative ribose uptake protein RbsU (rbsU) of Latilactobacillus sakei subsp. sakei (strain 23K) (Lactobacillus sakei subsp. sakei).